The sequence spans 218 residues: Eukaryotic translation initiation factor 3 subunit K (218 aa).

At alanine 2 the chain carries N-acetylalanine. Threonine 28 carries the phosphothreonine modification. The PCI domain maps to 42–204 (YDLEANLAVL…SIKPKNIVEK (163 aa)). Serine 217 carries the post-translational modification Phosphoserine.

Belongs to the eIF-3 subunit K family. Component of the eukaryotic translation initiation factor 3 (eIF-3) complex, which is composed of 13 subunits: EIF3A, EIF3B, EIF3C, EIF3D, EIF3E, EIF3F, EIF3G, EIF3H, EIF3I, EIF3J, EIF3K, EIF3L and EIF3M. The eIF-3 complex appears to include 3 stable modules: module A is composed of EIF3A, EIF3B, EIF3G and EIF3I; module B is composed of EIF3F, EIF3H, and EIF3M; and module C is composed of EIF3C, EIF3D, EIF3E, EIF3K and EIF3L. EIF3C of module C binds EIF3B of module A and EIF3H of module B, thereby linking the three modules. EIF3J is a labile subunit that binds to the eIF-3 complex via EIF3B. The eIF-3 complex interacts with RPS6KB1 under conditions of nutrient depletion. Mitogenic stimulation leads to binding and activation of a complex composed of MTOR and RPTOR, leading to phosphorylation and release of RPS6KB1 and binding of EIF4B to eIF-3. Identified in a HCV IRES-mediated translation complex, at least composed of EIF3C, IGF2BP1, RPS3 and HCV RNA-replicon. Interacts with ALKBH4, IFIT1 and IFIT2.

The protein localises to the nucleus. The protein resides in the cytoplasm. Functionally, component of the eukaryotic translation initiation factor 3 (eIF-3) complex, which is required for several steps in the initiation of protein synthesis. The eIF-3 complex associates with the 40S ribosome and facilitates the recruitment of eIF-1, eIF-1A, eIF-2:GTP:methionyl-tRNAi and eIF-5 to form the 43S pre-initiation complex (43S PIC). The eIF-3 complex stimulates mRNA recruitment to the 43S PIC and scanning of the mRNA for AUG recognition. The eIF-3 complex is also required for disassembly and recycling of post-termination ribosomal complexes and subsequently prevents premature joining of the 40S and 60S ribosomal subunits prior to initiation. The eIF-3 complex specifically targets and initiates translation of a subset of mRNAs involved in cell proliferation, including cell cycling, differentiation and apoptosis, and uses different modes of RNA stem-loop binding to exert either translational activation or repression. The sequence is that of Eukaryotic translation initiation factor 3 subunit K (Eif3k) from Mus musculus (Mouse).